The chain runs to 21 residues: Dart gland peptide (21 aa).

Residues 1–21 (SINNTGGSGNRRLDKNGFAGQ) are disordered. A glycan (N-linked (GlcNAc...) asparagine) is linked at Asn3.

It localises to the secreted. This Cornu aspersum (Brown garden snail) protein is Dart gland peptide.